The sequence spans 159 residues: Urease accessory protein UreE (159 aa).

This sequence belongs to the UreE family.

It is found in the cytoplasm. Its function is as follows. Involved in urease metallocenter assembly. Binds nickel. Probably functions as a nickel donor during metallocenter assembly. The protein is Urease accessory protein UreE of Pseudomonas entomophila (strain L48).